The chain runs to 466 residues: Soluble pyridine nucleotide transhydrogenase (466 aa).

E36–C45 is a binding site for FAD.

Belongs to the class-I pyridine nucleotide-disulfide oxidoreductase family. It depends on FAD as a cofactor.

It is found in the cytoplasm. The enzyme catalyses NAD(+) + NADPH = NADH + NADP(+). In terms of biological role, conversion of NADPH, generated by peripheral catabolic pathways, to NADH, which can enter the respiratory chain for energy generation. The polypeptide is Soluble pyridine nucleotide transhydrogenase (Escherichia coli O6:K15:H31 (strain 536 / UPEC)).